A 648-amino-acid chain; its full sequence is MWPQARLPPHPAMAEETRQSKLAAAKRKLKEYWQRNSPGVPAGAKRNRKTNGSIHETATSGGCHSPGDSATGIHGESPTSSATLKDLESPCQELAVVPDSRSVKVSQLKNTIKSLKQQNKQVEHQLEEEKKANNEKQKAERELEVQIQRLNIQKGKLNTDLYHTKRSLRYFEEESKDLAVRLQHSLQRKGELERALSAVTATQKKKAERQFSSRSKARMEWKLEQSMREQALLKAQLTQLKESLKEVQLERDEYAEHLKGERARWQQRMRKMSQEVCSLKKEKKHDKYRVEKLERSLSKLKHQMAEPLPPEPPAVPSEVELQHLRKELERVAGELQAQVEYNQRISLLNEGQKERLREQEERLQEQQERLPEQEERLQQLAEPQNSFKELNNENKSVLQLEQQVKELQEKLGKERLEAASQQKQQLTAQLSLMALPGEGDGGGHLDSEGEEAPRPIPSIPQDLESREAMSGFMDHLEEKADLSELVEKEELGFFQYYRERCHQKVYHPITKPGGSAKDAAPGGGHHQAGPGQGGDEGEAAGAAGDGVAAGGDYKGHSKFLVTAQNPAHEPSPGAPAPQELGAAHKHGDLCEVSLTDSVEPVQGEAREGSPHDNPTAQPIVQDHQEHPGLGSNCCVPFFCWAWLPRRRR.

The segment covering 1 to 11 (MWPQARLPPHP) has biased composition (pro residues). 2 disordered regions span residues 1-84 (MWPQ…SATL) and 119-139 (NKQVEHQLEEEKKANNEKQKA). Residues 50–62 (TNGSIHETATSGG) are compositionally biased toward polar residues. Coiled coils occupy residues 105–160 (VSQL…LNTD), 223–275 (LEQS…MSQE), and 318–424 (EVEL…QQKQ). Residues 121 to 139 (QVEHQLEEEKKANNEKQKA) are compositionally biased toward basic and acidic residues. 4 disordered regions span residues 356 to 376 (LREQEERLQEQQERLPEQEER), 434 to 461 (ALPGEGDGGGHLDSEGEEAPRPIPSIPQ), 508 to 549 (PITK…GVAA), and 600 to 624 (PVQGEAREGSPHDNPTAQPIVQDHQ). The span at 441–453 (GGGHLDSEGEEAP) shows a compositional bias: basic and acidic residues. Over residues 521-534 (PGGGHHQAGPGQGG) the composition is skewed to gly residues.

The protein belongs to the GOLGA8 family.

The protein is Golgin subfamily A member 8G of Homo sapiens (Human).